The primary structure comprises 546 residues: ATP-dependent RNA helicase DBP2 (546 aa).

The interval 1 to 56 is disordered; that stretch reads MTYGGRDQQYNKTNYKSRGGDFRGGRNSDRNSYNDRPQGGNYRGGFGGRSNYNQPQ. 2 positions are modified to omega-N-methylarginine: Arg-18 and Arg-43. The span at 18–33 shows a compositional bias: basic and acidic residues; it reads RGGDFRGGRNSDRNSY. Residues Ser-88 and Ser-90 each carry the phosphoserine modification. A Q motif motif is present at residues 113 to 141; it reads TTFDEAGFPDYVLNEVKAEGFDKPTGIQC. The 176-residue stretch at 144-319 folds into the Helicase ATP-binding domain; sequence WPMALSGRDM…ADYLNDPIQV (176 aa). Residue 157–164 coordinates ATP; it reads AATGSGKT. The DEAD box signature appears at 267–270; sequence DEAD. The Helicase C-terminal domain maps to 347 to 494; the sequence is RLNKYLETAS…NIPPELLKYD (148 aa). A Glycyl lysine isopeptide (Lys-Gly) (interchain with G-Cter in ubiquitin) cross-link involves residue Lys-474. The interval 493-546 is disordered; sequence YDRRSYGGGHPRYGGGRGGRGGYGRRGGYGGGRGGYGGNRQRDGGWGNRGRSNY. The segment covering 498–540 has biased composition (gly residues); the sequence is YGGGHPRYGGGRGGRGGYGRRGGYGGGRGGYGGNRQRDGGWGN. The RNA-binding RGG-box stretch occupies residues 505 to 530; that stretch reads YGGGRGGRGGYGRRGGYGGGRGGYGG. Dimethylated arginine; alternate occurs at positions 509, 512, 518, and 525. Omega-N-methylarginine; alternate is present on residues Arg-509, Arg-512, Arg-518, and Arg-525.

It belongs to the DEAD box helicase family. DDX5/DBP2 subfamily. As to quaternary structure, interacts with UPF1. Associates with polysomes.

Its subcellular location is the cytoplasm. The protein localises to the nucleus. The catalysed reaction is ATP + H2O = ADP + phosphate + H(+). ATP-dependent RNA helicase involved nonsense-mediated mRNA decay and ribosome biogenesis through rRNA processing. Associates directly with chromatin, correlating with transcriptional activity. Required for assembly of mRNA-binding proteins YRA1, NAB2, and MEX67 onto poly(A)+ RNA. The polypeptide is ATP-dependent RNA helicase DBP2 (Saccharomyces cerevisiae (strain ATCC 204508 / S288c) (Baker's yeast)).